The sequence spans 424 residues: MGYFIDRRLNGKNKSMVNRQRFLRRYKSQIKQSIADAINKRSVTDIESGESVSIPIDDINEPMFHQGNGGLRHRVHPGNDHFITNDRVDRPQGGGGGGSGQGNAGKDGEGEDEFVFQISKDEYLDLLFEDLALPNLKRNQYKQLAEFKTHRAGYTSNGVPANISVVRSLQNSLARRTAMTASKRRELRELEAALTVLENSEPAQLLEEERLRKAITELKQKIARVPFIDTFDLRYKNYERRPEPSSQAVMFCLMDVSGSMDQATKDMAKRFYILLYLFLSRTYKNVDVVYIRHHTQAKEVDEQEFFYSQETGGTIVSSALKLMDEVVQERYNPAQWNIYAAQASDGDNWADDSPLCHELLAKKILPVVRYYSYIEITRRAHQTLWREYEDLEEKFDNFAIQHIREPEDIYPVFRELFHKQTVDN.

The tract at residues 84 to 109 (TNDRVDRPQGGGGGGSGQGNAGKDGE) is disordered. The span at 92–105 (QGGGGGGSGQGNAG) shows a compositional bias: gly residues.

This sequence belongs to the UPF0229 family.

In Yersinia pseudotuberculosis serotype IB (strain PB1/+), this protein is UPF0229 protein YPTS_2141.